A 467-amino-acid polypeptide reads, in one-letter code: Cytochrome P450 76A1 (467 aa).

Heme is bound at residue C410.

It belongs to the cytochrome P450 family. Heme serves as cofactor.

The polypeptide is Cytochrome P450 76A1 (CYP76A1) (Solanum melongena (Eggplant)).